Consider the following 436-residue polypeptide: tRNA-2-methylthio-N(6)-dimethylallyladenosine synthase (436 aa).

The MTTase N-terminal domain maps to 5–121 (RKLFIKTYGC…LPDMLERTEG (117 aa)). Residues C14, C50, C84, C158, C162, and C165 each coordinate [4Fe-4S] cluster. The Radical SAM core domain maps to 144 to 373 (ALRGPTAFLT…LGEQQRAAQA (230 aa)). Residues 373 to 435 (AAMVGRELGV…PNSLAGERIG (63 aa)) form the TRAM domain.

The protein belongs to the methylthiotransferase family. MiaB subfamily. In terms of assembly, monomer. It depends on [4Fe-4S] cluster as a cofactor.

It is found in the cytoplasm. It catalyses the reaction N(6)-dimethylallyladenosine(37) in tRNA + (sulfur carrier)-SH + AH2 + 2 S-adenosyl-L-methionine = 2-methylsulfanyl-N(6)-dimethylallyladenosine(37) in tRNA + (sulfur carrier)-H + 5'-deoxyadenosine + L-methionine + A + S-adenosyl-L-homocysteine + 2 H(+). In terms of biological role, catalyzes the methylthiolation of N6-(dimethylallyl)adenosine (i(6)A), leading to the formation of 2-methylthio-N6-(dimethylallyl)adenosine (ms(2)i(6)A) at position 37 in tRNAs that read codons beginning with uridine. This is tRNA-2-methylthio-N(6)-dimethylallyladenosine synthase from Cereibacter sphaeroides (strain ATCC 17025 / ATH 2.4.3) (Rhodobacter sphaeroides).